Consider the following 413-residue polypeptide: Serine hydroxymethyltransferase (413 aa).

(6S)-5,6,7,8-tetrahydrofolate is bound by residues leucine 115 and glycine 119–leucine 121. N6-(pyridoxal phosphate)lysine is present on lysine 224.

The protein belongs to the SHMT family. Homodimer. Requires pyridoxal 5'-phosphate as cofactor.

The protein resides in the cytoplasm. It carries out the reaction (6R)-5,10-methylene-5,6,7,8-tetrahydrofolate + glycine + H2O = (6S)-5,6,7,8-tetrahydrofolate + L-serine. It participates in one-carbon metabolism; tetrahydrofolate interconversion. Its pathway is amino-acid biosynthesis; glycine biosynthesis; glycine from L-serine: step 1/1. Functionally, catalyzes the reversible interconversion of serine and glycine with tetrahydrofolate (THF) serving as the one-carbon carrier. This reaction serves as the major source of one-carbon groups required for the biosynthesis of purines, thymidylate, methionine, and other important biomolecules. Also exhibits THF-independent aldolase activity toward beta-hydroxyamino acids, producing glycine and aldehydes, via a retro-aldol mechanism. The sequence is that of Serine hydroxymethyltransferase from Mycoplasma mycoides subsp. mycoides SC (strain CCUG 32753 / NCTC 10114 / PG1).